The following is a 363-amino-acid chain: G-protein coupled receptor 78 (363 aa).

The Extracellular portion of the chain corresponds to 1 to 7 (MGPGEAL). The helical transmembrane segment at 8–28 (LAGLLVMVLAVALLSNALVLL) threads the bilayer. Topologically, residues 29-47 (CCAYSAELRTRASGVLLVN) are cytoplasmic. The helical transmembrane segment at 48-68 (LSLGHLLLAALDMPFTLLGVM) threads the bilayer. Topologically, residues 69–80 (RGRTPSAPGACQ) are extracellular. A disulfide bridge connects residues Cys-79 and Cys-156. Residues 81–101 (VIGFLDTFLASNAALSVAALS) traverse the membrane as a helical segment. Residues 102–122 (ADQWLAVGFPLRYAGRLRPRY) are Cytoplasmic-facing. The chain crosses the membrane as a helical span at residues 123 to 143 (AGLLLGCAWGQSLAFSGAALG). Residues 144–168 (CSWLGYSSAFASCSLRLPPEPERPR) lie on the Extracellular side of the membrane. A helical transmembrane segment spans residues 169 to 189 (FAAFTATLHAVGFVLPLAVLC). Topologically, residues 190–242 (LTSLQVHRVARRHCQRMDTVTMKALALLADLHPSVRQRCLIQQKRRRHRATRK) are cytoplasmic. The helical transmembrane segment at 243–263 (IGIAIATFLICFAPYVMTRLA) threads the bilayer. Residues 264-277 (ELVPFVTVNAQWGI) lie on the Extracellular side of the membrane. A helical transmembrane segment spans residues 278–297 (LSKCLTYSKAVADPFTYSLL). Over 298-363 (RRPFRQVLAG…ENDSCLQQTH (66 aa)) the chain is Cytoplasmic. Residues 340–363 (TPRPASTHNGSVDTENDSCLQQTH) form a disordered region. Residues 343-363 (PASTHNGSVDTENDSCLQQTH) show a composition bias toward polar residues.

It belongs to the G-protein coupled receptor 1 family. In terms of tissue distribution, high level of expression in placenta. Expressed throughout the brain at low level. No expression detected in skeletal muscle, lung, heart, liver, pancreas, or kidney.

Its subcellular location is the cell membrane. Its function is as follows. Orphan receptor. Displays a significant level of constitutive activity. Its effect is mediated by G(s)-alpha protein that stimulate adenylate cyclase, resulting in an elevation of intracellular cAMP. The protein is G-protein coupled receptor 78 (GPR78) of Homo sapiens (Human).